We begin with the raw amino-acid sequence, 297 residues long: UDP-N-acetylenolpyruvoylglucosamine reductase (297 aa).

In terms of domain architecture, FAD-binding PCMH-type spans 18–184 (QVGGPAEWYL…LSARLRLAPG (167 aa)). The active site involves R163. S214 (proton donor) is an active-site residue. E285 is an active-site residue.

FAD serves as cofactor.

It is found in the cytoplasm. The enzyme catalyses UDP-N-acetyl-alpha-D-muramate + NADP(+) = UDP-N-acetyl-3-O-(1-carboxyvinyl)-alpha-D-glucosamine + NADPH + H(+). Its pathway is cell wall biogenesis; peptidoglycan biosynthesis. In terms of biological role, cell wall formation. The polypeptide is UDP-N-acetylenolpyruvoylglucosamine reductase (Gloeobacter violaceus (strain ATCC 29082 / PCC 7421)).